The following is a 229-amino-acid chain: Lipoprotein-releasing system ATP-binding protein LolD 1 (229 aa).

In terms of domain architecture, ABC transporter spans 2-229; that stretch reads LVVSELSKSY…VRRGRFGITA (228 aa). 38 to 45 contacts ATP; sequence GPSGSGKT.

The protein belongs to the ABC transporter superfamily. Lipoprotein translocase (TC 3.A.1.125) family. The complex is composed of two ATP-binding proteins (LolD) and two transmembrane proteins (LolC and LolE).

The protein resides in the cell inner membrane. Part of the ABC transporter complex LolCDE involved in the translocation of mature outer membrane-directed lipoproteins, from the inner membrane to the periplasmic chaperone, LolA. Responsible for the formation of the LolA-lipoprotein complex in an ATP-dependent manner. The protein is Lipoprotein-releasing system ATP-binding protein LolD 1 of Rhodopirellula baltica (strain DSM 10527 / NCIMB 13988 / SH1).